The chain runs to 436 residues: UDP-N-acetylmuramate--L-alanine ligase (436 aa).

An ATP-binding site is contributed by 108-114 (GAHGKTS).

It belongs to the MurCDEF family.

The protein resides in the cytoplasm. It catalyses the reaction UDP-N-acetyl-alpha-D-muramate + L-alanine + ATP = UDP-N-acetyl-alpha-D-muramoyl-L-alanine + ADP + phosphate + H(+). It functions in the pathway cell wall biogenesis; peptidoglycan biosynthesis. Its function is as follows. Cell wall formation. This Bacillus cereus (strain AH187) protein is UDP-N-acetylmuramate--L-alanine ligase.